Reading from the N-terminus, the 607-residue chain is Zinc metalloproteinase-disintegrin-like atrase-A (607 aa).

The N-terminal stretch at 1–20 (MIQALLVIICLAVFPHQGSS) is a signal peptide. The propeptide occupies 21–196 (IILESGNVND…KTSQLTNTPE (176 aa)). In terms of domain architecture, Peptidase M12B spans 205-398 (KYIEFYLVVD…ERPQCILNKP (194 aa)). Glu-208 is a Ca(2+) binding site. Residues Asn-220 and Asn-270 are each glycosylated (N-linked (GlcNAc...) asparagine). Ca(2+) is bound at residue Asp-290. The N-linked (GlcNAc...) asparagine glycan is linked to Asn-301. Cystine bridges form between Cys-314-Cys-393, Cys-353-Cys-377, and Cys-355-Cys-360. Positions 338, 342, and 348 each coordinate Zn(2+). The Ca(2+) site is built by Cys-393, Asn-396, Asn-411, Phe-413, Glu-415, Glu-418, and Asp-421. Positions 406-492 (RPVCGNNFVE…ECPTDSLQRN (87 aa)) constitute a Disintegrin domain. Intrachain disulfides connect Cys-409–Cys-438, Cys-420–Cys-433, Cys-422–Cys-428, Cys-432–Cys-455, Cys-446–Cys-452, Cys-451–Cys-477, Cys-464–Cys-484, Cys-471–Cys-503, Cys-496–Cys-508, Cys-515–Cys-565, Cys-530–Cys-573, Cys-543–Cys-553, Cys-560–Cys-599, and Cys-593–Cys-604. A glycan (N-linked (GlcNAc...) asparagine) is linked at Asn-434. The short motif at 470-472 (DCD) is the D/ECD-tripeptide element. Ca(2+) contacts are provided by Asp-472, Leu-473, Glu-475, Asp-487, and Ser-488. Residue Asn-522 is glycosylated (N-linked (GlcNAc...) asparagine).

Belongs to the venom metalloproteinase (M12B) family. P-III subfamily. P-IIIa sub-subfamily. In terms of assembly, monomer. The cofactor is Zn(2+). As to expression, expressed by the venom gland.

The protein resides in the secreted. Snake venom zinc metalloproteinase that inhibits platelet aggregation by cleaving platelet glycoprotein Ib alpha (GP1BA) at Glu-298/Asp-299, and abolishes binding of von Willebrand factor (VWF) to GPIBA. This chain is Zinc metalloproteinase-disintegrin-like atrase-A, found in Naja atra (Chinese cobra).